Reading from the N-terminus, the 555-residue chain is MRLIGMPKEKYDPPDPRRIYTIMSAEEVANGKKSHWAELEISGRVRSLSTSLWSLTHLTALHLNDNYLSRIPPDIAKLHNLVYLDLSSNKLRSLPAELGNMVSLRELLLNNNLLRVLPYELGRLFQLQTLGLKGNPLSQDILNLYQDPDGTRKLLNFMLDNLAVHPEQLPPRPWITLKERDQILPSASFTVMCYNVLCDKYATRQLYGYCPSWALNWEYRKKGIMEEIVNCDADIISLQEVETEQYFTLFLPALKERGYDGFFSPKSRAKIMSEQERKHVDGCAIFFKTEKFTLVQKHTVEFNQVAMANSDGSEAMLNRVMTKDNIGVAVVLEVHKELFGAGMKPIHAADKQLLIVANAHMHWDPEYSDVKLIQTMMFVSEVKNILEKASSRPGSPTADPNSIPLVLCADLNSLPDSGVVEYLSNGGVADNHKDFKELRYNECLMNFSCNGKNGSSEGRITHGFQLKSAYENNLMPYTNYTFDFKGVIDYIFYSKTHMNVLGVLGPLDPQWLVENNITGCPHPHIPSDHFSLLTQLELHPPLLPLVNGVHLPNRR.

The tract at residues methionine 1–arginine 152 is required for interaction with CNOT1, CNOT3 and CNOT7. 4 LRR repeats span residues histidine 57 to leucine 78, asparagine 80 to methionine 101, serine 103 to phenylalanine 125, and glutamine 126 to proline 148. The tract at residues methionine 158–arginine 555 is nuclease domain. Mg(2+) is bound at residue glutamate 240. Residues glutamate 240, glutamate 276, histidine 360, and proline 365 each contribute to the substrate site. Residue aspartate 410 participates in Mg(2+) binding. Residue aspartate 410 is the Proton donor/acceptor of the active site. Positions 412, 479, and 484 each coordinate substrate.

Belongs to the CCR4/nocturin family. Component of the CCR4-NOT complex; distinct complexes seem to exist that differ in the participation of probably mutually exclusive catalytic subunits; the complex contains two deadenylase subunits, CNOT6 or CNOT6L, and CNOT7 or CNOT8. Interacts with CNOT1, CNOT3, CNOT7, CNOT8 and CNOT9. Interacts with TOB1. Interacts with NANOS2. Interacts with ZFP36. Interacts with ZFP36L2. Interacts with RBM46. Requires Mg(2+) as cofactor. Highly expressed in placenta, skeletal muscle, pancreas, testis and leukocytes. Weakly expressed in heart, spleen and thymus.

Its subcellular location is the cytoplasm. The protein resides in the nucleus. It catalyses the reaction Exonucleolytic cleavage of poly(A) to 5'-AMP.. With respect to regulation, inhibited by free AMP, and with lesser efficiency also by CMP, GMP, UMP, ATP and neomycin. In terms of biological role, has 3'-5' poly(A) exoribonuclease activity for synthetic poly(A) RNA substrate. Catalytic component of the CCR4-NOT complex which is one of the major cellular mRNA deadenylases and is linked to various cellular processes including bulk mRNA degradation, miRNA-mediated repression, translational repression during translational initiation and general transcription regulation. Additional complex functions may be a consequence of its influence on mRNA expression. May be involved in the deadenylation-dependent degradation of mRNAs through the 3'-UTR AU-rich element-mediated mechanism. Involved in deadenylation-dependent degradation of CDKN1B mRNA. Its mRNA deadenylase activity can be inhibited by TOB1. Mediates cell proliferation and cell survival and prevents cellular senescence. This Homo sapiens (Human) protein is CCR4-NOT transcription complex subunit 6-like (CNOT6L).